The following is a 288-amino-acid chain: Pantothenate synthetase (288 aa).

30 to 37 is an ATP binding site; sequence MGALHEGH. H37 (proton donor) is an active-site residue. (R)-pantoate is bound at residue Q61. Beta-alanine is bound at residue Q61. ATP is bound at residue 147 to 150; that stretch reads GEKD. Residue Q153 coordinates (R)-pantoate. Residues V176 and 184 to 187 contribute to the ATP site; that span reads ISSR.

The protein belongs to the pantothenate synthetase family. As to quaternary structure, homodimer.

It is found in the cytoplasm. It carries out the reaction (R)-pantoate + beta-alanine + ATP = (R)-pantothenate + AMP + diphosphate + H(+). The protein operates within cofactor biosynthesis; (R)-pantothenate biosynthesis; (R)-pantothenate from (R)-pantoate and beta-alanine: step 1/1. Functionally, catalyzes the condensation of pantoate with beta-alanine in an ATP-dependent reaction via a pantoyl-adenylate intermediate. This is Pantothenate synthetase from Chlorobium phaeobacteroides (strain BS1).